We begin with the raw amino-acid sequence, 217 residues long: MKIVLLGAPGAGKGTLAKDLSIMFSVPHISTGDMFREAVAAGTELGVKVQNILSSGALVPDEIVNQVVEERLRKQDCEKGFIFDGYPRTIAQAIALDEILQKMSKKLDLAIYLEASEETVVKRLTSRRICPKCGKIYNLISMPPVSDQICDDCGEQLVIREDDKEEVVRKRYRLYLETTAPLVEYYSGRDILVSVNSERDHRKLVEDVSRLLKKVIS.

10 to 15 (GAGKGT) is a binding site for ATP. The tract at residues 30–59 (STGDMFREAVAAGTELGVKVQNILSSGALV) is NMP. AMP-binding positions include Thr31, Arg36, 57-59 (ALV), 85-88 (GYPR), and Gln92. The segment at 126–163 (SRRICPKCGKIYNLISMPPVSDQICDDCGEQLVIREDD) is LID. ATP is bound at residue Arg127. Cys130 and Cys133 together coordinate Zn(2+). Residue 136-137 (IY) participates in ATP binding. Residues Cys150 and Cys153 each coordinate Zn(2+). Arg160 and Arg171 together coordinate AMP. Arg199 lines the ATP pocket.

This sequence belongs to the adenylate kinase family. Monomer.

It is found in the cytoplasm. It carries out the reaction AMP + ATP = 2 ADP. It functions in the pathway purine metabolism; AMP biosynthesis via salvage pathway; AMP from ADP: step 1/1. Catalyzes the reversible transfer of the terminal phosphate group between ATP and AMP. Plays an important role in cellular energy homeostasis and in adenine nucleotide metabolism. The polypeptide is Adenylate kinase (Pseudothermotoga lettingae (strain ATCC BAA-301 / DSM 14385 / NBRC 107922 / TMO) (Thermotoga lettingae)).